Reading from the N-terminus, the 358-residue chain is 3-dehydroquinate synthase (358 aa).

Residues 70-75 (DGEAHK), 104-108 (GVIGD), 128-129 (TT), K141, and K150 each bind NAD(+). The Zn(2+) site is built by E183, H246, and H263.

This sequence belongs to the sugar phosphate cyclases superfamily. Dehydroquinate synthase family. It depends on NAD(+) as a cofactor. The cofactor is Co(2+). Zn(2+) serves as cofactor.

The protein resides in the cytoplasm. The catalysed reaction is 7-phospho-2-dehydro-3-deoxy-D-arabino-heptonate = 3-dehydroquinate + phosphate. It functions in the pathway metabolic intermediate biosynthesis; chorismate biosynthesis; chorismate from D-erythrose 4-phosphate and phosphoenolpyruvate: step 2/7. Catalyzes the conversion of 3-deoxy-D-arabino-heptulosonate 7-phosphate (DAHP) to dehydroquinate (DHQ). The sequence is that of 3-dehydroquinate synthase from Bordetella bronchiseptica (strain ATCC BAA-588 / NCTC 13252 / RB50) (Alcaligenes bronchisepticus).